A 150-amino-acid chain; its full sequence is SsrA-binding protein (150 aa).

Residues 130–150 (DKRESLKEKDDRREMDRMFKR) form a disordered region.

Belongs to the SmpB family.

The protein localises to the cytoplasm. Its function is as follows. Required for rescue of stalled ribosomes mediated by trans-translation. Binds to transfer-messenger RNA (tmRNA), required for stable association of tmRNA with ribosomes. tmRNA and SmpB together mimic tRNA shape, replacing the anticodon stem-loop with SmpB. tmRNA is encoded by the ssrA gene; the 2 termini fold to resemble tRNA(Ala) and it encodes a 'tag peptide', a short internal open reading frame. During trans-translation Ala-aminoacylated tmRNA acts like a tRNA, entering the A-site of stalled ribosomes, displacing the stalled mRNA. The ribosome then switches to translate the ORF on the tmRNA; the nascent peptide is terminated with the 'tag peptide' encoded by the tmRNA and targeted for degradation. The ribosome is freed to recommence translation, which seems to be the essential function of trans-translation. This chain is SsrA-binding protein, found in Phocaeicola vulgatus (strain ATCC 8482 / DSM 1447 / JCM 5826 / CCUG 4940 / NBRC 14291 / NCTC 11154) (Bacteroides vulgatus).